Consider the following 50-residue polypeptide: Small, acid-soluble spore protein K (50 aa).

The interval 1-50 (MVRNKAKGFPNQNNNKFEGEPRAKDDYASKRADGSINSHPQERMRASGRR) is disordered. Basic and acidic residues-rich tracts occupy residues 17–33 (FEGEPRAKDDYASKRAD) and 40–50 (PQERMRASGRR).

This sequence belongs to the SspK family.

The protein resides in the spore core. The chain is Small, acid-soluble spore protein K from Bacillus velezensis (strain DSM 23117 / BGSC 10A6 / LMG 26770 / FZB42) (Bacillus amyloliquefaciens subsp. plantarum).